The following is a 363-amino-acid chain: 3-dehydroquinate synthase (363 aa).

NAD(+) is bound by residues 103 to 107 (GAVGD), 127 to 128 (TT), K139, K148, and 166 to 169 (FSET). The Zn(2+) site is built by E181, H243, and H260.

It belongs to the sugar phosphate cyclases superfamily. Dehydroquinate synthase family. It depends on Co(2+) as a cofactor. Zn(2+) serves as cofactor. NAD(+) is required as a cofactor.

The protein resides in the cytoplasm. It catalyses the reaction 7-phospho-2-dehydro-3-deoxy-D-arabino-heptonate = 3-dehydroquinate + phosphate. Its pathway is metabolic intermediate biosynthesis; chorismate biosynthesis; chorismate from D-erythrose 4-phosphate and phosphoenolpyruvate: step 2/7. Catalyzes the conversion of 3-deoxy-D-arabino-heptulosonate 7-phosphate (DAHP) to dehydroquinate (DHQ). The chain is 3-dehydroquinate synthase from Lysinibacillus sphaericus (strain C3-41).